A 563-amino-acid polypeptide reads, in one-letter code: Arginine--tRNA ligase (563 aa).

The 'HIGH' region motif lies at 122-132 (PNIAKPISMGH).

The protein belongs to the class-I aminoacyl-tRNA synthetase family. As to quaternary structure, monomer.

The protein resides in the cytoplasm. The catalysed reaction is tRNA(Arg) + L-arginine + ATP = L-arginyl-tRNA(Arg) + AMP + diphosphate. The polypeptide is Arginine--tRNA ligase (Latilactobacillus sakei subsp. sakei (strain 23K) (Lactobacillus sakei subsp. sakei)).